The chain runs to 317 residues: Tenomodulin (317 aa).

Residues 1-30 (MAKNPPENCEGCHILNAEALKSKKIRKSLK) are Cytoplasmic-facing. The chain crosses the membrane as a helical; Signal-anchor for type II membrane protein span at residues 31–50 (ICGLVFGILALTLIVLFWGS). The Extracellular portion of the chain corresponds to 51 to 317 (KHFWPEVSKK…WWVARMLGRV (267 aa)). Residues 93-186 (GNGTDETLEV…ICDNVTMYWI (94 aa)) form the BRICHOS domain. Asn94 is a glycosylation site (N-linked (GlcNAc...) asparagine). Cys120 and Cys178 form a disulfide bridge. N-linked (GlcNAc...) asparagine glycosylation is present at Asn180. The residue at position 239 (Ser239) is a Phosphoserine.

This sequence belongs to the chondromodulin-1 family. As to expression, highly expressed in tendons.

It is found in the membrane. The protein localises to the nucleus envelope. In terms of biological role, may be an angiogenesis inhibitor. In Rattus norvegicus (Rat), this protein is Tenomodulin (Tnmd).